Consider the following 703-residue polypeptide: FERM domain-containing protein 7 (703 aa).

The FERM domain occupies leucine 2–glutamate 282. Residues arginine 525–isoleucine 552 are a coiled coil.

In terms of tissue distribution, in the developing cerebral cortex, strong expression is observed in the ventricular and intermediate zones at 13 and 17 dpc. At 17 dpc and P0, expression appears to be restricted to the cortical plate. In neonates, highly expressed in cortex, hippocampus, cerebellum, olfactory bulb and eye with little or no expression in liver, kidney, skeletal muscle or heart muscle (at protein level).

The protein localises to the cell projection. It localises to the neuron projection. It is found in the growth cone. Functionally, plays a role in neurite development, may be through the activation of the GTPase RAC1. Plays a role in the control of eye movement and gaze stability. This chain is FERM domain-containing protein 7, found in Mus musculus (Mouse).